Reading from the N-terminus, the 299-residue chain is UPF0276 protein ABO_1518 (299 aa).

It belongs to the UPF0276 family.

The chain is UPF0276 protein ABO_1518 from Alcanivorax borkumensis (strain ATCC 700651 / DSM 11573 / NCIMB 13689 / SK2).